We begin with the raw amino-acid sequence, 482 residues long: UDP-N-acetylmuramate--L-alanine ligase (482 aa).

123 to 129 serves as a coordination point for ATP; that stretch reads GTHGKTT.

The protein belongs to the MurCDEF family.

The protein resides in the cytoplasm. The enzyme catalyses UDP-N-acetyl-alpha-D-muramate + L-alanine + ATP = UDP-N-acetyl-alpha-D-muramoyl-L-alanine + ADP + phosphate + H(+). Its pathway is cell wall biogenesis; peptidoglycan biosynthesis. Functionally, cell wall formation. The polypeptide is UDP-N-acetylmuramate--L-alanine ligase (Pseudomonas putida (strain GB-1)).